The chain runs to 574 residues: Adenine deaminase (574 aa).

This sequence belongs to the metallo-dependent hydrolases superfamily. Adenine deaminase family. It depends on Mn(2+) as a cofactor.

The catalysed reaction is adenine + H2O + H(+) = hypoxanthine + NH4(+). The protein is Adenine deaminase of Thermosipho africanus (strain TCF52B).